We begin with the raw amino-acid sequence, 158 residues long: Protein Smg homolog (158 aa).

It belongs to the Smg family.

The sequence is that of Protein Smg homolog from Vibrio cholerae serotype O1 (strain ATCC 39315 / El Tor Inaba N16961).